A 169-amino-acid chain; its full sequence is Large ribosomal subunit protein bL19m (169 aa).

The transit peptide at 1–16 directs the protein to the mitochondrion; it reads MWSRNVRLLGSWTRSY.

Belongs to the bacterial ribosomal protein bL19 family. Component of the mitochondrial large ribosomal subunit (mt-LSU). Mature yeast 74S mitochondrial ribosomes consist of a small (37S) and a large (54S) subunit. The 37S small subunit contains a 15S ribosomal RNA (15S mt-rRNA) and 34 different proteins. The 54S large subunit contains a 21S rRNA (21S mt-rRNA) and 46 different proteins.

The protein localises to the mitochondrion. Component of the mitochondrial ribosome (mitoribosome), a dedicated translation machinery responsible for the synthesis of mitochondrial genome-encoded proteins, including at least some of the essential transmembrane subunits of the mitochondrial respiratory chain. The mitoribosomes are attached to the mitochondrial inner membrane and translation products are cotranslationally integrated into the membrane. bL19m is essential for respiration. This is Large ribosomal subunit protein bL19m (IMG1) from Saccharomyces cerevisiae (strain ATCC 204508 / S288c) (Baker's yeast).